The primary structure comprises 89 residues: Small ribosomal subunit protein uS14 (89 aa).

Belongs to the universal ribosomal protein uS14 family. As to quaternary structure, part of the 30S ribosomal subunit. Contacts proteins S3 and S10.

Binds 16S rRNA, required for the assembly of 30S particles and may also be responsible for determining the conformation of the 16S rRNA at the A site. The protein is Small ribosomal subunit protein uS14 of Acholeplasma laidlawii (strain PG-8A).